Here is a 331-residue protein sequence, read N- to C-terminus: MGSSGLARLQGLFAVYKPPGLKWLHLRETVELQLLKGLNAQQPPAPDQRVRFLLGPVEGSEEKKLTLRATNVPSLTTHRLVRGPAFTNLKIGVGHRLDVQASGVLVLAVGHGRSLLTDMYDAHLTKDYTVRGLLGKATDNFCEDGRLIEKTTYDHVTRERLDRILAVIQGSHQKALVMYSNLDLKSQEAYEMAVQGVIRPMNKSPMLISGIRCLHFAPPEFLLEVQCMHETQQQLRKLVHEIGLELKTSAVCTQVRRTRDGFFGLDDALLRTQWDLHNIQDAIQAAAPRVAAELQKNLSLKLGHHQLPSTGQPWGLKDPSSTLELESCSGQ.

Residue Asp98 is the Nucleophile of the active site. Positions 309–331 are disordered; that stretch reads STGQPWGLKDPSSTLELESCSGQ. Over residues 319-331 the composition is skewed to polar residues; the sequence is PSSTLELESCSGQ.

The protein belongs to the pseudouridine synthase TruB family. Forms a regulatory protein-RNA complex, consisting of RCC1L, NGRN, RPUSD3, RPUSD4, TRUB2, FASTKD2 and 16S mt-rRNA.

It localises to the mitochondrion matrix. It carries out the reaction a uridine in mRNA = a pseudouridine in mRNA. It catalyses the reaction uridine(55) in tRNA = pseudouridine(55) in tRNA. Functionally, minor enzyme contributing to the isomerization of uridine to pseudouridine (pseudouridylation) of specific mitochondrial mRNAs (mt-mRNAs) such as COXI and COXIII mt-mRNAs. As a component of a functional protein-RNA module, consisting of RCC1L, NGRN, RPUSD3, RPUSD4, TRUB2, FASTKD2 and 16S mitochondrial ribosomal RNA (16S mt-rRNA), controls 16S mt-rRNA abundance and is required for intra-mitochondrial translation. Also catalyzes pseudouridylation of some tRNAs, including synthesis of pseudouridine(55) from uracil-55, in the psi GC loop of a subset of tRNAs. This is Pseudouridylate synthase TRUB2, mitochondrial from Mus musculus (Mouse).